The sequence spans 141 residues: Large ribosomal subunit protein uL11 (141 aa).

It belongs to the universal ribosomal protein uL11 family. As to quaternary structure, part of the ribosomal stalk of the 50S ribosomal subunit. Interacts with L10 and the large rRNA to form the base of the stalk. L10 forms an elongated spine to which L12 dimers bind in a sequential fashion forming a multimeric L10(L12)X complex. Post-translationally, one or more lysine residues are methylated.

Functionally, forms part of the ribosomal stalk which helps the ribosome interact with GTP-bound translation factors. This Herpetosiphon aurantiacus (strain ATCC 23779 / DSM 785 / 114-95) protein is Large ribosomal subunit protein uL11.